The following is a 21-amino-acid chain: Outer membrane protein A (21 aa).

The beta stranded transmembrane segment at 6–16 threads the bilayer; it reads TWYTGAKLGWS.

Belongs to the outer membrane OOP (TC 1.B.6) superfamily. OmpA family. As to quaternary structure, monomer and homodimer.

The protein localises to the cell outer membrane. Its function is as follows. With TolR probably plays a role in maintaining the position of the peptidoglycan cell wall in the periplasm. Acts as a porin with low permeability that allows slow penetration of small solutes; an internal gate slows down solute passage. In Actinobacillus lignieresii, this protein is Outer membrane protein A.